The sequence spans 260 residues: Kallikrein-8 (260 aa).

A signal peptide spans 1-28; the sequence is MGRPPPCAIQPWILLLLFMGAWAGLTRA. Positions 29-32 are excised as a propeptide; the sequence is QGSK. Residues 33–257 form the Peptidase S1 domain; it reads ILEGRECIPH…YTTWIKKTMD (225 aa). 6 cysteine pairs are disulfide-bonded: Cys-39/Cys-173, Cys-58/Cys-74, Cys-145/Cys-246, Cys-152/Cys-218, Cys-184/Cys-198, and Cys-208/Cys-233. His-73 functions as the Charge relay system in the catalytic mechanism. Asn-110 carries an N-linked (GlcNAc...) asparagine glycan. Asp-120 functions as the Charge relay system in the catalytic mechanism. Ser-212 serves as the catalytic Charge relay system.

The protein belongs to the peptidase S1 family. Kallikrein subfamily. As to quaternary structure, interacts with SPINK9. Expressed in the limbic system of mouse brain and is localized at highest concentration in pyramidal neurons of the hippocampal CA1-3 subfields. Also detected in spinal cord gray matter and in keratinized stratified epithelia of epidermis, hair, tongue, palate, nasal cavity, pharynges, esophagus and forestomach. In skin and mucus membranes, expressed in stratum spinosum and stratum granulosum. Expressed during estrus in vaginal epithelial cells but not stromal cells. Within the vaginal epithelium, expressed in prickle cells, granular cells and parakeratotic cells but not in basal cells. Not expressed in uterus. Expressed in the keratinocytes.

Its subcellular location is the secreted. The protein localises to the cytoplasm. It carries out the reaction Cleavage of amide substrates following the basic amino acids Arg or Lys at the P1 position, with a preference for Arg over Lys.. With respect to regulation, strongly inhibited by diisopropyl fluorophosphate, leupeptin and (4-amidinophenyl)methanesulfonyl 1-fluoride. Serine protease which is capable of degrading a number of proteins such as casein, fibrinogen, kininogen, fibronectin and collagen type IV. Also cleaves L1CAM in response to increased neural activity. Induces neurite outgrowth and fasciculation of cultured hippocampal neurons. Plays a role in the formation and maturation of orphan and small synaptic boutons in the Schaffer-collateral pathway, regulates Schaffer-collateral long-term potentiation in the hippocampus and is required for memory acquisition and synaptic plasticity. Involved in skin desquamation and keratinocyte proliferation. Plays a role in the secondary phase of pathogenesis following spinal cord injury. The polypeptide is Kallikrein-8 (Klk8) (Mus musculus (Mouse)).